Here is a 333-residue protein sequence, read N- to C-terminus: Taste receptor type 2 member 110 (333 aa).

Topologically, residues 1–13 are extracellular; the sequence is MFSQIISTSDIFT. The helical transmembrane segment at 14–34 threads the bilayer; sequence FTIILFVELVIGILGNGFIAL. The Cytoplasmic portion of the chain corresponds to 35–60; the sequence is VNIMDWTKRRSISSADQILTALAITR. The helical transmembrane segment at 61 to 81 threads the bilayer; that stretch reads FLYVWFMIICILLFMLCPHLL. Residues 82-89 lie on the Extracellular side of the membrane; the sequence is TRSEIVTS. A helical membrane pass occupies residues 90 to 110; it reads IGIIWIVNNHFSVWLATCLGV. Topologically, residues 111–133 are cytoplasmic; that stretch reads FYFLKIANFSNSLFLYLKWRVKK. Residues 134–154 form a helical membrane-spanning segment; it reads VVLMIIQVSMIFLILNLLSLS. The Extracellular segment spans residues 155-205; sequence MYDQFSIDVYEGNTSYNLGDSTPFPTISLFINSSKVFVITNSSHIFLPINS. 2 N-linked (GlcNAc...) asparagine glycosylation sites follow: asparagine 186 and asparagine 195. The chain crosses the membrane as a helical span at residues 206 to 226; sequence LFMLIPFTVSLVAFLMLIFSL. Over 227-255 the chain is Cytoplasmic; that stretch reads WKHHKKMQVNAKPPRDASTMAHIKALQTG. Residues 256-276 form a helical membrane-spanning segment; it reads FSFLLLYAVYLLFIVIGMLSL. The Extracellular segment spans residues 277 to 283; sequence RLIGGKL. Residues 284–304 form a helical membrane-spanning segment; sequence ILLFDHISGIGFPISHSFVLI. Residues 305-333 lie on the Cytoplasmic side of the membrane; the sequence is LGNNKLRQASLSVLHCLRCRSKDMDTMGP.

This sequence belongs to the G-protein coupled receptor T2R family.

The protein localises to the membrane. Gustducin-coupled receptor implicated in the perception of bitter compounds in the oral cavity and the gastrointestinal tract. Signals through PLCB2 and the calcium-regulated cation channel TRPM5. This Mus musculus (Mouse) protein is Taste receptor type 2 member 110.